We begin with the raw amino-acid sequence, 45 residues long: Parabutoporin (45 aa).

In terms of assembly, monomer and homodimer. In terms of tissue distribution, expressed by the venom gland.

It is found in the secreted. Its subcellular location is the target cell membrane. Its function is as follows. At high concentrations, acts as a pore former in cellular membranes and causes the leakage of the cells. At submicromolar concentrations, degranulates granulocytes and has a weak hemolytic activity against human red blood cells. Also strongly inhibits the production of superoxide anions. Has a strong antibacterial activity against Gram-negative bacteria but is less active against Gram-positive bacteria. Also has antifungal activity. Induces reversible G-protein dependent Ca(2+) release from intracellular stores and increase Ca(2+) influx in HL-60 cells. Induces the activation of the Rac pathway in granulocytes. Synergistically enhances the excitatory effects of short and long chain ion-channel-specific neurotoxins by interaction with the neuronal membranes. The sequence is that of Parabutoporin from Parabuthus schlechteri (Scorpion).